Reading from the N-terminus, the 54-residue chain is Large ribosomal subunit protein bL33 (54 aa).

It belongs to the bacterial ribosomal protein bL33 family.

The sequence is that of Large ribosomal subunit protein bL33 from Corynebacterium urealyticum (strain ATCC 43042 / DSM 7109).